A 115-amino-acid chain; its full sequence is Ribosomal protein uS4-like (115 aa).

This sequence belongs to the universal ribosomal protein uS4 family.

In Azoarcus sp. (strain BH72), this protein is Ribosomal protein uS4-like.